A 240-amino-acid chain; its full sequence is Aquaporin Z (240 aa).

The next 2 membrane-spanning stretches (helical) occupy residues 10 to 30 and 35 to 55; these read AIGT…AAGF and IGLV…AYAI. The short motif at 64–66 is the NPA 1 element; it reads NPA. Transmembrane regions (helical) follow at residues 82 to 102, 131 to 151, and 160 to 180; these read ILPY…LLYI, MMAC…IIMG, and GFAP…SIPV. The NPA 2 motif lies at 186–188; the sequence is NPA. The chain crosses the membrane as a helical span at residues 194 to 214; sequence ALFVGGWAMAQLWLFWVAPLI.

It belongs to the MIP/aquaporin (TC 1.A.8) family. In terms of assembly, homotetramer.

It is found in the cell inner membrane. It carries out the reaction H2O(in) = H2O(out). Functionally, channel that permits osmotically driven movement of water in both directions. It is involved in the osmoregulation and in the maintenance of cell turgor during volume expansion in rapidly growing cells. It mediates rapid entry or exit of water in response to abrupt changes in osmolarity. This Bradyrhizobium diazoefficiens (strain JCM 10833 / BCRC 13528 / IAM 13628 / NBRC 14792 / USDA 110) protein is Aquaporin Z.